The sequence spans 202 residues: ATP-dependent Clp protease proteolytic subunit (202 aa).

Residue Ser-101 is the Nucleophile of the active site. His-126 is a catalytic residue.

It belongs to the peptidase S14 family. Component of the chloroplastic Clp protease core complex.

It is found in the plastid. The protein resides in the chloroplast stroma. The catalysed reaction is Hydrolysis of proteins to small peptides in the presence of ATP and magnesium. alpha-casein is the usual test substrate. In the absence of ATP, only oligopeptides shorter than five residues are hydrolyzed (such as succinyl-Leu-Tyr-|-NHMec, and Leu-Tyr-Leu-|-Tyr-Trp, in which cleavage of the -Tyr-|-Leu- and -Tyr-|-Trp bonds also occurs).. In terms of biological role, cleaves peptides in various proteins in a process that requires ATP hydrolysis. Has a chymotrypsin-like activity. Plays a major role in the degradation of misfolded proteins. The sequence is that of ATP-dependent Clp protease proteolytic subunit from Calycanthus floridus var. glaucus (Eastern sweetshrub).